We begin with the raw amino-acid sequence, 273 residues long: Putative phosphoenolpyruvate synthase regulatory protein (273 aa).

153–160 (AVSRAGKT) contributes to the ADP binding site.

The protein belongs to the pyruvate, phosphate/water dikinase regulatory protein family. PSRP subfamily.

It catalyses the reaction [pyruvate, water dikinase] + ADP = [pyruvate, water dikinase]-phosphate + AMP + H(+). It carries out the reaction [pyruvate, water dikinase]-phosphate + phosphate + H(+) = [pyruvate, water dikinase] + diphosphate. Its function is as follows. Bifunctional serine/threonine kinase and phosphorylase involved in the regulation of the phosphoenolpyruvate synthase (PEPS) by catalyzing its phosphorylation/dephosphorylation. The protein is Putative phosphoenolpyruvate synthase regulatory protein of Xylella fastidiosa (strain 9a5c).